A 365-amino-acid chain; its full sequence is Aspartate-semialdehyde dehydrogenase (365 aa).

The NADP(+) site is built by threonine 12, glycine 13, serine 14, valine 15, serine 37, serine 40, leucine 85, and aspartate 86. Cysteine 156 acts as the Acyl-thioester intermediate in catalysis. Glycine 188 is an NADP(+) binding site. Histidine 256 serves as the catalytic Proton acceptor. Position 343 (asparagine 343) interacts with NADP(+).

It belongs to the aspartate-semialdehyde dehydrogenase family. As to quaternary structure, homotetramer; dimer of dimers.

The protein resides in the cytoplasm. Its subcellular location is the cytosol. It is found in the nucleus. It carries out the reaction L-aspartate 4-semialdehyde + phosphate + NADP(+) = 4-phospho-L-aspartate + NADPH + H(+). It participates in amino-acid biosynthesis; L-methionine biosynthesis via de novo pathway; L-homoserine from L-aspartate: step 2/3. The protein operates within amino-acid biosynthesis; L-threonine biosynthesis; L-threonine from L-aspartate: step 2/5. Its activity is regulated as follows. Inhibited by the non-competitive inhibitors phthalaldehyde and naphthalene, the competitive inhibitor 1,4-benzoquinone and derivates such as 2-chloro-3-methoxy-1,4-naphthoquinone, 2,3-dichloro-1,4-naphthoquinone, 2-chloro-1,4-naphthoquinone, 2-bromo-1,4-naphthoquinone and 2,3-dichloro-5,8-dihydroxy-1,4-naphthoquinone, and 5-aminoisoquinoline. Inhibited by vinyl sulfones. Functionally, catalyzes the NADPH-dependent formation of L-aspartate 4-semialdehyde (L-ASA) by the reductive dephosphorylation of 4-phospho-L-aspartate. Mediates the second step in the biosynthesis of amino acids that derive from aspartate (the aspartate family of amino acids), including methioinine and threonine, the latter of which is a precursor to isoleucine. The sequence is that of Aspartate-semialdehyde dehydrogenase from Candida albicans (strain SC5314 / ATCC MYA-2876) (Yeast).